The chain runs to 337 residues: GTP 3',8-cyclase (337 aa).

The region spanning 17-243 (PFQRQYYYLR…HKSHTDGPAK (227 aa)) is the Radical SAM core domain. Arg-26 is a binding site for GTP. [4Fe-4S] cluster contacts are provided by Cys-33 and Cys-37. Tyr-39 is a binding site for S-adenosyl-L-methionine. Cys-40 serves as a coordination point for [4Fe-4S] cluster. Arg-76 is a binding site for GTP. Gly-80 is an S-adenosyl-L-methionine binding site. Thr-107 lines the GTP pocket. Ser-131 contributes to the S-adenosyl-L-methionine binding site. Position 168 (Lys-168) interacts with GTP. Residue Met-202 participates in S-adenosyl-L-methionine binding. [4Fe-4S] cluster contacts are provided by Cys-265 and Cys-268. 270-272 (RLR) is a binding site for GTP. Cys-282 is a [4Fe-4S] cluster binding site.

It belongs to the radical SAM superfamily. MoaA family. As to quaternary structure, monomer and homodimer. Requires [4Fe-4S] cluster as cofactor.

It catalyses the reaction GTP + AH2 + S-adenosyl-L-methionine = (8S)-3',8-cyclo-7,8-dihydroguanosine 5'-triphosphate + 5'-deoxyadenosine + L-methionine + A + H(+). It functions in the pathway cofactor biosynthesis; molybdopterin biosynthesis. In terms of biological role, catalyzes the cyclization of GTP to (8S)-3',8-cyclo-7,8-dihydroguanosine 5'-triphosphate. This Haemophilus influenzae (strain 86-028NP) protein is GTP 3',8-cyclase.